The following is a 1017-amino-acid chain: Pikachurin (1017 aa).

An N-terminal signal peptide occupies residues 1 to 24; it reads MDLIRGVLLRLLLLASSLGPGAVS. 2 Fibronectin type-III domains span residues 37 to 136 and 144 to 239; these read PPLD…TLSQ and APQQ…TLCP. N-linked (GlcNAc...) asparagine glycosylation occurs at Asn-47. Residues 343-381 form the EGF-like 1 domain; sequence FDMPCDETLCSADSFCVNDYTWGGSRCQCTLGKGGESCS. 11 disulfide bridges follow: Cys-347/Cys-358, Cys-352/Cys-369, Cys-371/Cys-380, Cys-534/Cys-564, Cys-569/Cys-580, Cys-574/Cys-590, Cys-592/Cys-601, Cys-788/Cys-799, Cys-793/Cys-808, Cys-810/Cys-819, and Cys-987/Cys-1014. One can recognise a Laminin G-like 1 domain in the interval 386-564; it reads IQYPQFFGHS…ALSGADVGEC (179 aa). EGF-like domains lie at 565–602 and 784–820; these read SSGICDEASCIHGGTCTAIKADSYICLCPLGFKGRHCE and AAHPCVRAPCAHGGSCRPRKEGYDCDCPLGFEGLHCQ. The 180-residue stretch at 609–788 folds into the Laminin G-like 2 domain; the sequence is IPQFRESLRS…VNVENAAHPC (180 aa). One can recognise a Laminin G-like 3 domain in the interval 835 to 1014; sequence IEIPQFIGRS…AVDGKNINTC (180 aa).

Interacts with DAG1 alpha-dystroglycan. Interacts with GPR158 and GPR179; transsynaptic interaction is required for synaptic organization of photoreceptor cells. O-glycosylated; contains chondroitin sulfate and heparan sulfate.

Its subcellular location is the secreted. The protein resides in the extracellular space. The protein localises to the extracellular matrix. It localises to the synaptic cleft. It is found in the presynaptic active zone. In terms of biological role, involved in both the retinal photoreceptor ribbon synapse formation and physiological functions of visual perception. Plays a key role in the synaptic organization of photoreceptors by mediating transsynaptic interaction between alpha-dystroglycan and GPR179 on the postsynaptic membrane. Necessary for proper bipolar dendritic tip apposition to the photoreceptor ribbon synapse. Promotes matrix assembly and cell adhesiveness. The chain is Pikachurin (EGFLAM) from Homo sapiens (Human).